A 228-amino-acid chain; its full sequence is Phosphoglycolate phosphatase (228 aa).

Catalysis depends on aspartate 12, which acts as the Nucleophile. 3 residues coordinate Mg(2+): aspartate 12, aspartate 14, and aspartate 177.

Belongs to the HAD-like hydrolase superfamily. CbbY/CbbZ/Gph/YieH family. Mg(2+) is required as a cofactor.

The enzyme catalyses 2-phosphoglycolate + H2O = glycolate + phosphate. It participates in organic acid metabolism; glycolate biosynthesis; glycolate from 2-phosphoglycolate: step 1/1. Specifically catalyzes the dephosphorylation of 2-phosphoglycolate. Is involved in the dissimilation of the intracellular 2-phosphoglycolate formed during the DNA repair of 3'-phosphoglycolate ends, a major class of DNA lesions induced by oxidative stress. The sequence is that of Phosphoglycolate phosphatase from Vibrio vulnificus (strain CMCP6).